The chain runs to 450 residues: Cell division cycle 20.5, cofactor of APC complex (450 aa).

WD repeat units lie at residues 129–166 (ADDF…TYKL), 171–210 (EEEG…QVRT), 214–251 (GHES…SIVE), 255–294 (GHTE…SSNP), 304–346 (EHTA…CLNS), 348–389 (ETGS…KMAE), and 392–431 (GHTS…PKTT).

The protein belongs to the WD repeat CDC20/Fizzy family. The APC/C is composed of at least 11 subunits that stay tightly associated throughout the cell cycle. Binds to GIG1 and PYM. Part of the mitotic checkpoint complex (MCC); interacts with MAD2 and BUB1.

It is found in the nucleus. It functions in the pathway protein modification; protein ubiquitination. Its function is as follows. Component of the anaphase promoting complex/cyclosome (APC/C), a cell cycle-regulated E3 ubiquitin-protein ligase complex that controls progression through mitosis and the G1 phase of the cell cycle. The sequence is that of Cell division cycle 20.5, cofactor of APC complex (CDC20-5) from Arabidopsis thaliana (Mouse-ear cress).